The sequence spans 141 residues: Large ribosomal subunit protein uL11 (141 aa).

This sequence belongs to the universal ribosomal protein uL11 family. As to quaternary structure, part of the ribosomal stalk of the 50S ribosomal subunit. Interacts with L10 and the large rRNA to form the base of the stalk. L10 forms an elongated spine to which L12 dimers bind in a sequential fashion forming a multimeric L10(L12)X complex. Post-translationally, one or more lysine residues are methylated.

Forms part of the ribosomal stalk which helps the ribosome interact with GTP-bound translation factors. The protein is Large ribosomal subunit protein uL11 of Prochlorococcus marinus (strain MIT 9215).